The following is a 512-amino-acid chain: Rab11 family-interacting protein 2 (512 aa).

A C2 domain is found at 1–120 (MMLSEQAQKW…DKQRRKTEWF (120 aa)). The segment at 15 to 102 (VQVTVLQAKD…GLDKFLGQVA (88 aa)) is necessary for its cellular translocation to the plasma membrane. Disordered stretches follow at residues 174-231 (RKSD…MSDL) and 263-287 (PESG…NQPG). 2 stretches are compositionally biased toward polar residues: residues 221–231 (RLSSAHSMSDL) and 277–287 (SFDTSKLNQPG). S227 carries the phosphoserine; by MARK2 modification. Position 277 is a phosphoserine (S277). Residues 323 to 325 (NPF) carry the NPF 1 motif. Residues 347–374 (KESKREKREKVSLFERVTGKRDSRRPDK) are compositionally biased toward basic and acidic residues. The tract at residues 347–390 (KESKREKREKVSLFERVTGKRDSRRPDKLNNGGSDSPCDLKSPS) is disordered. 2 consecutive short sequence motifs (NPF) follow at residues 406 to 408 (NPF) and 440 to 442 (NPF). Positions 437-499 (PDNNPFDATA…EETPSILRVP (63 aa)) constitute an FIP-RBD domain. A necessary for interaction with AP2A1, RAB11A, subcellular location, endocytosis activity and homooligomerization region spans residues 465–512 (ELLRRKDTHIRELEDYIDNLLVRVMEETPSILRVPYEPSRKAGKFTNS).

In terms of assembly, homooligomerizes in a Rab11-independent manner. Forms a heterooligomeric complex with RAB11FIP4. Interacts with AP2A1, MYO5B, RAB25 and REPS1. Interacts with RAB11A and RAB11B (activated GTP-bound form). Interacts with NPC1L1. Interacts (via NPF motifs) with EHD1 and EHD3. Interacts with TICAM2; this interaction directs RAB11FIP2 to the phagosome. Interacts with RAB14 and RAB25 (GTP-bound forms). In terms of processing, phosphorylation at Ser-227 by MARK2 regulates epithelial cell polarity.

Its subcellular location is the cell membrane. It localises to the recycling endosome membrane. A Rab11 effector binding preferentially phosphatidylinositol 3,4,5-trisphosphate (PtdInsP3) and phosphatidic acid (PA) and acting in the regulation of the transport of vesicles from the endosomal recycling compartment (ERC) to the plasma membrane. Involved in insulin granule exocytosis. Also involved in receptor-mediated endocytosis and membrane trafficking of recycling endosomes, probably originating from clathrin-coated vesicles. Required in a complex with MYO5B and RAB11 for the transport of NPC1L1 to the plasma membrane. Also acts as a regulator of cell polarity. Plays an essential role in phagocytosis through a mechanism involving TICAM2, RAC1 and CDC42 Rho GTPases for controlling actin-dynamics. This Mus musculus (Mouse) protein is Rab11 family-interacting protein 2 (Rab11fip2).